Reading from the N-terminus, the 294-residue chain is MLDKLPTEQRNPKTMDIDTKSIKEILEMMNREDFTVPQTVQKEISFIEEAVHRTIHSFKSNGRLIYIGAGTSGRLGVLDASECPPTFGVSSEMVKGLISGGLEAITKAKEGAEDSEAMAKQDLLDIKLTEHDTVIGIAASGRTPYVKGALSYANEIGASTVAISNNKNSEIGKIAEIAIEAETGPEVITGSTRLKAGTAQKLILNMISTASMIGVGKVYENLMVDLKPTNKKLVDRSKRIIMEATQVDYTTAENYLQKANNSVKTAIVMILLNCNVDEAIQHLDRAEGFIRKTK.

The SIS domain maps to 54-217; it reads TIHSFKSNGR…STASMIGVGK (164 aa). Residue Glu82 is the Proton donor of the active site. Residue Glu113 is part of the active site.

The protein belongs to the GCKR-like family. MurNAc-6-P etherase subfamily. Homodimer.

It carries out the reaction N-acetyl-D-muramate 6-phosphate + H2O = N-acetyl-D-glucosamine 6-phosphate + (R)-lactate. It functions in the pathway amino-sugar metabolism; N-acetylmuramate degradation. Functionally, specifically catalyzes the cleavage of the D-lactyl ether substituent of MurNAc 6-phosphate, producing GlcNAc 6-phosphate and D-lactate. This is N-acetylmuramic acid 6-phosphate etherase from Oceanobacillus iheyensis (strain DSM 14371 / CIP 107618 / JCM 11309 / KCTC 3954 / HTE831).